Reading from the N-terminus, the 155-residue chain is Small ribosomal subunit protein uS7cz/uS7cy (155 aa).

It belongs to the universal ribosomal protein uS7 family. As to quaternary structure, part of the 30S ribosomal subunit.

The protein localises to the plastid. The protein resides in the chloroplast. Its function is as follows. One of the primary rRNA binding proteins, it binds directly to 16S rRNA where it nucleates assembly of the head domain of the 30S subunit. The polypeptide is Small ribosomal subunit protein uS7cz/uS7cy (rps7-A) (Morus indica (Mulberry)).